A 401-amino-acid polypeptide reads, in one-letter code: NADH-quinone oxidoreductase subunit D (401 aa).

This sequence belongs to the complex I 49 kDa subunit family. As to quaternary structure, NDH-1 is composed of 14 different subunits. Subunits NuoB, C, D, E, F, and G constitute the peripheral sector of the complex.

It is found in the cell inner membrane. The catalysed reaction is a quinone + NADH + 5 H(+)(in) = a quinol + NAD(+) + 4 H(+)(out). Its function is as follows. NDH-1 shuttles electrons from NADH, via FMN and iron-sulfur (Fe-S) centers, to quinones in the respiratory chain. The immediate electron acceptor for the enzyme in this species is believed to be ubiquinone. Couples the redox reaction to proton translocation (for every two electrons transferred, four hydrogen ions are translocated across the cytoplasmic membrane), and thus conserves the redox energy in a proton gradient. The sequence is that of NADH-quinone oxidoreductase subunit D from Rhodopseudomonas palustris (strain HaA2).